Reading from the N-terminus, the 67-residue chain is Alpha-conotoxin-like Pu1.1 (67 aa).

Residues 1-21 (MGMRMMFTVFLLVVLATTVVS) form the signal peptide. Residues 22 to 46 (FTSDRTSDGRNAAFNAFDLIALTAR) constitute a propeptide that is removed on maturation. Pyrrolidone carboxylic acid is present on Q47. 2 disulfide bridges follow: C49–C55 and C50–C63. Residues 51–53 (NVP) form a lacks the Ser-Xaa-Pro motif that is crucial for potent interaction with nAChR region. At C63 the chain carries Cysteine amide.

It belongs to the conotoxin A superfamily. Expressed by the venom duct.

The protein resides in the secreted. Functionally, alpha-conotoxins act on postsynaptic membranes, they bind to the nicotinic acetylcholine receptors (nAChR) and thus inhibit them. Has possibly a distinct nAChR binding mode from other alpha-conotoxins, due to a different three residue motif (lacks the Ser-Xaa-Pro motif). The sequence is that of Alpha-conotoxin-like Pu1.1 from Conus pulicarius (Flea-bitten cone).